The primary structure comprises 125 residues: Protein ApaG (125 aa).

Positions 1–125 (MADSPRVCVQ…FRLAVPTLIH (125 aa)) constitute an ApaG domain.

The sequence is that of Protein ApaG from Cronobacter sakazakii (strain ATCC BAA-894) (Enterobacter sakazakii).